We begin with the raw amino-acid sequence, 93 residues long: UPF0297 protein PEPE_1262 (93 aa).

The protein belongs to the UPF0297 family.

This Pediococcus pentosaceus (strain ATCC 25745 / CCUG 21536 / LMG 10740 / 183-1w) protein is UPF0297 protein PEPE_1262.